The primary structure comprises 170 residues: MTGVDEILNYKRNPDDDYYALLGCDENSTVEQITAEYKVLALQYHPDKNDGDKEAEAKFQQLKEAKETLCEPSKRALYDKWRQSGIAMGFKQWLGMKDHVQQSMHWSKPNTKDRMLEGEPGKPSGPSSLGPSNPGARRASEGGAALWGRWGAGNQEPPSEVISKFRNYEI.

The J domain maps to 17 to 82 (DYYALLGCDE…SKRALYDKWR (66 aa)). The interval 101–170 (QQSMHWSKPN…VISKFRNYEI (70 aa)) is disordered. A compositionally biased stretch (basic and acidic residues) spans 110 to 120 (NTKDRMLEGEP). 2 stretches are compositionally biased toward low complexity: residues 121–135 (GKPS…SNPG) and 142–153 (GGAALWGRWGAG).

The sequence is that of J domain-containing protein (jdp) from Manduca sexta (Tobacco hawkmoth).